Reading from the N-terminus, the 89-residue chain is Ubiquinol-cytochrome-c reductase complex assembly factor 3 (89 aa).

The Mitochondrial matrix portion of the chain corresponds to 1 to 7 (MEVARKA). Residues 8–28 (LVAVAVLGGGAGVGSILFALV) traverse the membrane as a helical segment. The interval 23–80 (ILFALVTPGELQKQSMLQEMPERDSRRRDEAVRTTELVMATLKDAAATKENVAWRRNW) is mediates lipid-binding. The Mitochondrial intermembrane portion of the chain corresponds to 29–89 (TPGELQKQSM…WTVSGDGRSA (61 aa)).

This sequence belongs to the UQCC3 family. As to quaternary structure, associates with the ubiquinol-cytochrome c reductase complex (mitochondrial respiratory chain complex III(CIII) or cytochrome b-c1 complex). Interacts with UQCC1. Forms a complex, named COMC, composed of UQCC1, UQCC2; UQCC3 and UQCC4; mediates MT-CYB hemylation and association with the first nuclear-encoded complex III subunit UQCRQ. Probably cleaved by OMA1 under mitochondrial stress conditions.

The protein resides in the mitochondrion inner membrane. In terms of biological role, required for the assembly of the ubiquinol-cytochrome c reductase complex (mitochondrial respiratory chain complex III or cytochrome b-c1 complex), mediating cytochrome b recruitment and probably stabilization within the complex. Thereby, plays an important role in ATP production by mitochondria. Cardiolipin-binding protein, it may also control the cardiolipin composition of mitochondria membranes and their morphology. This chain is Ubiquinol-cytochrome-c reductase complex assembly factor 3, found in Mus musculus (Mouse).